A 42-amino-acid polypeptide reads, in one-letter code: Photosystem I reaction center subunit IX (42 aa).

A helical membrane pass occupies residues 8-28 (YLSTIPVVGAIWLTFTAGFII).

The protein belongs to the PsaJ family.

It localises to the plastid. The protein resides in the chloroplast thylakoid membrane. May help in the organization of the PsaE and PsaF subunits. The chain is Photosystem I reaction center subunit IX from Gracilaria tenuistipitata var. liui (Red alga).